A 605-amino-acid polypeptide reads, in one-letter code: Indole-3-acetic acid-amido synthetase GH3.8 (605 aa).

Residues Ser-115, 342-346, Tyr-365, Asp-421, and Arg-440 each bind AMP; that span reads MYASS.

This sequence belongs to the IAA-amido conjugating enzyme family. Expressed in the inner floral organs (lodicules, stamens and carpels) and at lower levels in lemmas and paleas.

Its function is as follows. Catalyzes the synthesis of indole-3-acetic acid (IAA)-amino acid conjugates, providing a mechanism for the plant to cope with the presence of excessive free auxin. Produces more IAA-Asp levels than IAA-Ala levels in vitro. May participate in the activation of disease resistance by preventing the accumulation of free IAA, which reduces the expression of a group of auxin-responsive genes encoding expansins that control cell wall loosening and expansion. Contributes to late events in stamen and carpel differentiation, and influences floret fertility. In Oryza sativa subsp. indica (Rice), this protein is Indole-3-acetic acid-amido synthetase GH3.8 (GH3.8).